Consider the following 227-residue polypeptide: Cytochrome c oxidase subunit 2 (227 aa).

Residues 1–14 are Mitochondrial intermembrane-facing; that stretch reads MANHSQLGFQDASS. Residues 15–45 form a helical membrane-spanning segment; it reads PIMEELVEFHDHALMVALAICSLVLYLLTLM. Over 46 to 58 the chain is Mitochondrial matrix; the sequence is LMEKLSSNTVDAQ. The helical transmembrane segment at 59–86 threads the bilayer; the sequence is EVELIWTILPAIVLVLLALPSLQILYMM. Topologically, residues 87–227 are mitochondrial intermembrane; sequence DEIDEPDLTL…FEAWSSLLSS (141 aa). Residues H160, C195, E197, C199, H203, and M206 each contribute to the Cu cation site. Residue E197 participates in Mg(2+) binding.

The protein belongs to the cytochrome c oxidase subunit 2 family. In terms of assembly, component of the cytochrome c oxidase (complex IV, CIV), a multisubunit enzyme composed of 14 subunits. The complex is composed of a catalytic core of 3 subunits MT-CO1, MT-CO2 and MT-CO3, encoded in the mitochondrial DNA, and 11 supernumerary subunits COX4I, COX5A, COX5B, COX6A, COX6B, COX6C, COX7A, COX7B, COX7C, COX8 and NDUFA4, which are encoded in the nuclear genome. The complex exists as a monomer or a dimer and forms supercomplexes (SCs) in the inner mitochondrial membrane with NADH-ubiquinone oxidoreductase (complex I, CI) and ubiquinol-cytochrome c oxidoreductase (cytochrome b-c1 complex, complex III, CIII), resulting in different assemblies (supercomplex SCI(1)III(2)IV(1) and megacomplex MCI(2)III(2)IV(2)). Found in a complex with TMEM177, COA6, COX18, COX20, SCO1 and SCO2. Interacts with TMEM177 in a COX20-dependent manner. Interacts with COX20. Interacts with COX16. Cu cation is required as a cofactor.

Its subcellular location is the mitochondrion inner membrane. The catalysed reaction is 4 Fe(II)-[cytochrome c] + O2 + 8 H(+)(in) = 4 Fe(III)-[cytochrome c] + 2 H2O + 4 H(+)(out). Component of the cytochrome c oxidase, the last enzyme in the mitochondrial electron transport chain which drives oxidative phosphorylation. The respiratory chain contains 3 multisubunit complexes succinate dehydrogenase (complex II, CII), ubiquinol-cytochrome c oxidoreductase (cytochrome b-c1 complex, complex III, CIII) and cytochrome c oxidase (complex IV, CIV), that cooperate to transfer electrons derived from NADH and succinate to molecular oxygen, creating an electrochemical gradient over the inner membrane that drives transmembrane transport and the ATP synthase. Cytochrome c oxidase is the component of the respiratory chain that catalyzes the reduction of oxygen to water. Electrons originating from reduced cytochrome c in the intermembrane space (IMS) are transferred via the dinuclear copper A center (CU(A)) of subunit 2 and heme A of subunit 1 to the active site in subunit 1, a binuclear center (BNC) formed by heme A3 and copper B (CU(B)). The BNC reduces molecular oxygen to 2 water molecules using 4 electrons from cytochrome c in the IMS and 4 protons from the mitochondrial matrix. This chain is Cytochrome c oxidase subunit 2 (MT-CO2), found in Gallus gallus (Chicken).